A 358-amino-acid chain; its full sequence is tRNA-specific 2-thiouridylase MnmA (358 aa).

ATP is bound by residues glycine 8–serine 15 and methionine 34. Residues asparagine 94–aspartate 96 are interaction with target base in tRNA. The active-site Nucleophile is the cysteine 99. A disulfide bond links cysteine 99 and cysteine 196. Residue glycine 123 coordinates ATP. Residues lysine 146–glutamine 148 are interaction with tRNA. Catalysis depends on cysteine 196, which acts as the Cysteine persulfide intermediate. Positions arginine 308 to tyrosine 309 are interaction with tRNA.

The protein belongs to the MnmA/TRMU family.

The protein resides in the cytoplasm. The catalysed reaction is S-sulfanyl-L-cysteinyl-[protein] + uridine(34) in tRNA + AH2 + ATP = 2-thiouridine(34) in tRNA + L-cysteinyl-[protein] + A + AMP + diphosphate + H(+). Catalyzes the 2-thiolation of uridine at the wobble position (U34) of tRNA, leading to the formation of s(2)U34. The polypeptide is tRNA-specific 2-thiouridylase MnmA (Thiobacillus denitrificans (strain ATCC 25259 / T1)).